The sequence spans 456 residues: Neurexin-3-beta (456 aa).

An N-terminal signal peptide occupies residues 1-35 (MHLRIHARRNPPRRPAWTLGIWSLFWGCIVSSVWS). Topologically, residues 36 to 381 (SSNVASSSSS…EVIRESSSTT (346 aa)) are extracellular. The tract at residues 41-63 (SSSSSPGSHSQHEHHFHGSKHHS) is disordered. Basic residues predominate over residues 52 to 63 (HEHHFHGSKHHS). Residues 82–282 (ATYIFGKSGG…NPNIKINGSV (201 aa)) enclose the Laminin G-like domain. Ca(2+)-binding residues include Asp134 and Ile151. Asn181 carries N-linked (GlcNAc...) asparagine glycosylation. Ca(2+) is bound by residues Ile233 and Asn235. Residues Asn279 and Asn323 are each glycosylated (N-linked (GlcNAc...) asparagine). Positions 316-340 (ATTTTRKNRSTASIQPTSDDLVSSA) are disordered. Residues 325–340 (STASIQPTSDDLVSSA) are compositionally biased toward polar residues. Ser339 carries an O-linked (Xyl...) (heparan sulfate) serine glycan. A helical transmembrane segment spans residues 382-402 (GMVVGIVAAAALCILILLYAM). The Cytoplasmic portion of the chain corresponds to 403–456 (YKYRNRDEGSYQVDETRNYISNSAQSNGTLLKEKPPSSKGGHKKQKNKDKEYYV). Residues 424–456 (NSAQSNGTLLKEKPPSSKGGHKKQKNKDKEYYV) are disordered.

This sequence belongs to the neurexin family. In terms of assembly, weakly interacts with CBLN1 and CBLN2. Very weak binding, if any, to CBLN4. Specific isoforms bind neuroligins NLGN1, NLGN2 and NLGN3. Interacts with CLSTN3. Processed by alpha-secretase leading to the formation of an extracellular soluble protein as well as a C-terminal membrane-embedded fragment (CTF). Proteolysis of these CTFs by gamma-secretase releases intracellular domains (ICDs) and extracellular peptides. In terms of processing, O-glycosylated; contains heparan sulfate. Heparan sulfate attachment is required for synapse development by mediating interactions with neuroligins.

The protein resides in the presynaptic cell membrane. The protein localises to the secreted. Neuronal cell surface protein that may be involved in cell recognition and cell adhesion. May mediate intracellular signaling. Functions as part of a trans-synaptic complex by binding to cerebellins and postsynaptic GRID1. This interaction helps regulate the activity of NMDA and AMPA receptors at hippocampal synapses without affecting synapse formation. NRXN3B-CBLN2-GRID1 complex transduce presynaptic signals into postsynaptic AMPAR response. In Bos taurus (Bovine), this protein is Neurexin-3-beta (NRXN3).